A 319-amino-acid polypeptide reads, in one-letter code: 4-hydroxy-3-methylbut-2-enyl diphosphate reductase (319 aa).

Cys-18 lines the [4Fe-4S] cluster pocket. (2E)-4-hydroxy-3-methylbut-2-enyl diphosphate is bound by residues His-47 and His-81. Positions 47 and 81 each coordinate dimethylallyl diphosphate. Positions 47 and 81 each coordinate isopentenyl diphosphate. Position 103 (Cys-103) interacts with [4Fe-4S] cluster. His-131 is a binding site for (2E)-4-hydroxy-3-methylbut-2-enyl diphosphate. Position 131 (His-131) interacts with dimethylallyl diphosphate. His-131 provides a ligand contact to isopentenyl diphosphate. The active-site Proton donor is the Glu-133. Thr-172 is a binding site for (2E)-4-hydroxy-3-methylbut-2-enyl diphosphate. [4Fe-4S] cluster is bound at residue Cys-202. Positions 230, 231, 232, and 275 each coordinate (2E)-4-hydroxy-3-methylbut-2-enyl diphosphate. Ser-230, Ser-231, Asn-232, and Ser-275 together coordinate dimethylallyl diphosphate. The isopentenyl diphosphate site is built by Ser-230, Ser-231, Asn-232, and Ser-275.

Belongs to the IspH family. The cofactor is [4Fe-4S] cluster.

The enzyme catalyses isopentenyl diphosphate + 2 oxidized [2Fe-2S]-[ferredoxin] + H2O = (2E)-4-hydroxy-3-methylbut-2-enyl diphosphate + 2 reduced [2Fe-2S]-[ferredoxin] + 2 H(+). The catalysed reaction is dimethylallyl diphosphate + 2 oxidized [2Fe-2S]-[ferredoxin] + H2O = (2E)-4-hydroxy-3-methylbut-2-enyl diphosphate + 2 reduced [2Fe-2S]-[ferredoxin] + 2 H(+). Its pathway is isoprenoid biosynthesis; dimethylallyl diphosphate biosynthesis; dimethylallyl diphosphate from (2E)-4-hydroxy-3-methylbutenyl diphosphate: step 1/1. It functions in the pathway isoprenoid biosynthesis; isopentenyl diphosphate biosynthesis via DXP pathway; isopentenyl diphosphate from 1-deoxy-D-xylulose 5-phosphate: step 6/6. Functionally, catalyzes the conversion of 1-hydroxy-2-methyl-2-(E)-butenyl 4-diphosphate (HMBPP) into a mixture of isopentenyl diphosphate (IPP) and dimethylallyl diphosphate (DMAPP). Acts in the terminal step of the DOXP/MEP pathway for isoprenoid precursor biosynthesis. This is 4-hydroxy-3-methylbut-2-enyl diphosphate reductase from Beijerinckia indica subsp. indica (strain ATCC 9039 / DSM 1715 / NCIMB 8712).